Here is a 302-residue protein sequence, read N- to C-terminus: Heme A synthase (302 aa).

At 1 to 8 (MFSKKNLK) the chain is on the cytoplasmic side. The helical transmembrane segment at 9 to 29 (WLSVLATVIMAFVQLGGALVT) threads the bilayer. Over 30-67 (KTGSADGCGSDWPLCHGAFLPQNLPIQTLIELSHRAVS) the chain is Extracellular. A disulfide bridge links Cys37 with Cys44. Glu60 is a catalytic residue. Residue His63 coordinates heme o. A helical membrane pass occupies residues 68–88 (GLSLIVVLWLVIVAWKHIGYI). Residues 89 to 93 (KEVKP) are Cytoplasmic-facing. Residues 94-114 (LSCISVGFLLIQALVGAAAVM) form a helical membrane-spanning segment. Topologically, residues 115–122 (WQQNAYVL) are extracellular. Residues 123–143 (ALHFGISLISFSSVFVLTLII) traverse the membrane as a helical segment. A heme o-binding site is contributed by His125. Topologically, residues 144–161 (YEVDRKYEADELFIRKPL) are cytoplasmic. Residues 162 to 182 (RIYTWIMALIVYMTIYTGALV) traverse the membrane as a helical segment. The Extracellular portion of the chain corresponds to 183–215 (RHKEASLAYGQWPLPFNDLMPHNVQDWVNLTHR). Residue His214 participates in heme b binding. A helical membrane pass occupies residues 216–236 (GMALIAFIWILITFIHAVNNY). At 237 to 244 (RENRTIRY) the chain is on the cytoplasmic side. Residues 245–265 (GYTAAFILVILQVTTGALSII) traverse the membrane as a helical segment. The Extracellular portion of the chain corresponds to 266-271 (TEVNLF). The chain crosses the membrane as a helical span at residues 272–292 (IALLHALFITLLFGLIAYFII). His276 lines the heme b pocket. Residues 293–302 (LMLRTIRSGG) lie on the Cytoplasmic side of the membrane.

The protein belongs to the COX15/CtaA family. Type 1 subfamily. Interacts with CtaB. Heme b serves as cofactor.

It localises to the cell membrane. The catalysed reaction is Fe(II)-heme o + 2 A + H2O = Fe(II)-heme a + 2 AH2. It participates in porphyrin-containing compound metabolism; heme A biosynthesis; heme A from heme O: step 1/1. Its function is as follows. Catalyzes the conversion of heme O to heme A by two successive hydroxylations of the methyl group at C8. The first hydroxylation forms heme I, the second hydroxylation results in an unstable dihydroxymethyl group, which spontaneously dehydrates, resulting in the formyl group of heme A. The protein is Heme A synthase of Staphylococcus saprophyticus subsp. saprophyticus (strain ATCC 15305 / DSM 20229 / NCIMB 8711 / NCTC 7292 / S-41).